We begin with the raw amino-acid sequence, 117 residues long: Large ribosomal subunit protein bL19 (117 aa).

This sequence belongs to the bacterial ribosomal protein bL19 family.

Functionally, this protein is located at the 30S-50S ribosomal subunit interface and may play a role in the structure and function of the aminoacyl-tRNA binding site. This Cutibacterium acnes (strain DSM 16379 / KPA171202) (Propionibacterium acnes) protein is Large ribosomal subunit protein bL19.